Consider the following 100-residue polypeptide: Large ribosomal subunit protein uL23 (100 aa).

Belongs to the universal ribosomal protein uL23 family. In terms of assembly, part of the 50S ribosomal subunit. Contacts protein L29, and trigger factor when it is bound to the ribosome.

Functionally, one of the early assembly proteins it binds 23S rRNA. One of the proteins that surrounds the polypeptide exit tunnel on the outside of the ribosome. Forms the main docking site for trigger factor binding to the ribosome. This Aeromonas salmonicida (strain A449) protein is Large ribosomal subunit protein uL23.